Consider the following 208-residue polypeptide: Uracil phosphoribosyltransferase (208 aa).

5-phospho-alpha-D-ribose 1-diphosphate-binding positions include Arg78, Arg103, and 130-138 (DPMLATGGS). Uracil contacts are provided by residues Ile193 and 198–200 (GDA). Asp199 provides a ligand contact to 5-phospho-alpha-D-ribose 1-diphosphate.

Belongs to the UPRTase family. Requires Mg(2+) as cofactor.

It carries out the reaction UMP + diphosphate = 5-phospho-alpha-D-ribose 1-diphosphate + uracil. It participates in pyrimidine metabolism; UMP biosynthesis via salvage pathway; UMP from uracil: step 1/1. With respect to regulation, allosterically activated by GTP. In terms of biological role, catalyzes the conversion of uracil and 5-phospho-alpha-D-ribose 1-diphosphate (PRPP) to UMP and diphosphate. The chain is Uracil phosphoribosyltransferase from Vibrio parahaemolyticus serotype O3:K6 (strain RIMD 2210633).